Reading from the N-terminus, the 148-residue chain is Large ribosomal subunit protein bL9 (148 aa).

It belongs to the bacterial ribosomal protein bL9 family.

Functionally, binds to the 23S rRNA. This chain is Large ribosomal subunit protein bL9, found in Bifidobacterium animalis subsp. lactis (strain AD011).